The primary structure comprises 380 residues: MTEEVIVIAKWDYTAQQDQELDIKKNERLWLLDDSKTWWRVRNAANRTGYVPSNYVERKNSLKKGSLVKNLKDTLGLGKTRRKTSARDASPTPSTDAEYPANGSGADRIYDLNIPAFVKFAYVAEREDELSLVKGSRVTVMEKCSDGWWRGSYNGQIGWFPSNYVLEEVDEAAAESPSFLSLRKGASLSNGQGSRVLHVVQTLYPFSSVTEEELNFEKGETMEVIEKPENDPEWWKCKNARGQVGLVPKNYVVVLSDGPALHPAHAPQISYTGPSSSGRFAGREWYYGNVTRHQAECALNERGVEGDFLIRDSESSPSDFSVSLKASGKNKHFKVQLVDNVYCIGQRRFHTMDELVEHYKKAPIFTSEHGEKLYLVRALQ.

Threonine 2 is modified (N-acetylthreonine). Residues threonine 2–serine 61 enclose the SH3 1 domain. The segment at lysine 79–asparagine 102 is disordered. Serine 90 is modified (phosphoserine). The residue at position 92 (threonine 92) is a Phosphothreonine. Serine 94 bears the Phosphoserine mark. Tyrosine 110 carries the phosphotyrosine modification. 2 consecutive SH3 domains span residues aspartate 111–aspartate 170 and arginine 195–aspartate 257. Residues tryptophan 285–glutamine 380 enclose the SH2 domain.

Interacts with DOCK1, LIMS1 and TGFB1I1. Part of a complex containing PPP1R15B, PP1 and NCK2. Interacts with FASLG. Interacts with AXL. Interacts with PAK1, PKN2 and SOS1. Interacts (via SH2 domain) with EGFR. Interacts (via SH2 domain) with DDR1. Interacts with IRS1. Phosphorylated. As to expression, ubiquitous.

It is found in the cytoplasm. The protein localises to the endoplasmic reticulum. Its function is as follows. Adapter protein which associates with tyrosine-phosphorylated growth factor receptors or their cellular substrates. Maintains low levels of EIF2S1 phosphorylation by promoting its dephosphorylation by PP1. Plays a role in ELK1-dependent transcriptional activation in response to activated Ras signaling. The polypeptide is Cytoplasmic protein NCK2 (NCK2) (Homo sapiens (Human)).